Reading from the N-terminus, the 397-residue chain is Serpin B10 (397 aa).

The Nuclear localization signal motif lies at lysine 74 to lysine 77.

It belongs to the serpin family. Ov-serpin subfamily.

The protein localises to the nucleus. It localises to the cytoplasm. Its function is as follows. Protease inhibitor that may play a role in the regulation of protease activities during hematopoiesis and apoptosis induced by TNF. May regulate protease activities in the cytoplasm and in the nucleus. The protein is Serpin B10 (SERPINB10) of Rhinolophus ferrumequinum (Greater horseshoe bat).